The sequence spans 78 residues: UPF0154 protein lp_2061 (78 aa).

The chain crosses the membrane as a helical span at residues 5-27 (TGIWILIVVIGVLVGLTGGFFGA).

The protein belongs to the UPF0154 family.

It is found in the membrane. The polypeptide is UPF0154 protein lp_2061 (Lactiplantibacillus plantarum (strain ATCC BAA-793 / NCIMB 8826 / WCFS1) (Lactobacillus plantarum)).